Here is a 197-residue protein sequence, read N- to C-terminus: dITP/XTP pyrophosphatase (197 aa).

8-13 (TGNQGK) contributes to the substrate binding site. Residue Asp-69 is the Proton acceptor of the active site. Asp-69 serves as a coordination point for Mg(2+). Substrate is bound by residues Ser-70, 154–157 (FGYD), Lys-177, and 182–183 (HR).

Belongs to the HAM1 NTPase family. In terms of assembly, homodimer. The cofactor is Mg(2+).

The enzyme catalyses XTP + H2O = XMP + diphosphate + H(+). It carries out the reaction dITP + H2O = dIMP + diphosphate + H(+). It catalyses the reaction ITP + H2O = IMP + diphosphate + H(+). Functionally, pyrophosphatase that catalyzes the hydrolysis of nucleoside triphosphates to their monophosphate derivatives, with a high preference for the non-canonical purine nucleotides XTP (xanthosine triphosphate), dITP (deoxyinosine triphosphate) and ITP. Seems to function as a house-cleaning enzyme that removes non-canonical purine nucleotides from the nucleotide pool, thus preventing their incorporation into DNA/RNA and avoiding chromosomal lesions. This Photobacterium profundum (strain SS9) protein is dITP/XTP pyrophosphatase.